Here is a 189-residue protein sequence, read N- to C-terminus: Large ribosomal subunit protein uL5 (189 aa).

This sequence belongs to the universal ribosomal protein uL5 family. Part of the 50S ribosomal subunit; part of the 5S rRNA/L5/L18/L25 subcomplex. Contacts the 5S rRNA and the P site tRNA. Forms a bridge to the 30S subunit in the 70S ribosome.

In terms of biological role, this is one of the proteins that bind and probably mediate the attachment of the 5S RNA into the large ribosomal subunit, where it forms part of the central protuberance. In the 70S ribosome it contacts protein S13 of the 30S subunit (bridge B1b), connecting the 2 subunits; this bridge is implicated in subunit movement. Contacts the P site tRNA; the 5S rRNA and some of its associated proteins might help stabilize positioning of ribosome-bound tRNAs. The polypeptide is Large ribosomal subunit protein uL5 (Parafrankia sp. (strain EAN1pec)).